The chain runs to 360 residues: Chorismate synthase (360 aa).

NADP(+) contacts are provided by arginine 48 and arginine 54. Residues 125–127 (RSS), 246–247 (NA), glycine 286, 301–305 (KPTSS), and arginine 327 contribute to the FMN site.

This sequence belongs to the chorismate synthase family. In terms of assembly, homotetramer. It depends on FMNH2 as a cofactor.

It carries out the reaction 5-O-(1-carboxyvinyl)-3-phosphoshikimate = chorismate + phosphate. It participates in metabolic intermediate biosynthesis; chorismate biosynthesis; chorismate from D-erythrose 4-phosphate and phosphoenolpyruvate: step 7/7. Catalyzes the anti-1,4-elimination of the C-3 phosphate and the C-6 proR hydrogen from 5-enolpyruvylshikimate-3-phosphate (EPSP) to yield chorismate, which is the branch point compound that serves as the starting substrate for the three terminal pathways of aromatic amino acid biosynthesis. This reaction introduces a second double bond into the aromatic ring system. This Actinobacillus succinogenes (strain ATCC 55618 / DSM 22257 / CCUG 43843 / 130Z) protein is Chorismate synthase.